The chain runs to 1563 residues: Ribulose bisphosphate carboxylase (1563 aa).

Positions 32 and 79 each coordinate substrate. The propeptide at 197 to 217 (LAAAFVGASTTRKASSVARRA) is linker. A substrate-binding site is contributed by Asn-328. Residue Lys-383 is the Proton acceptor of the active site. Lys-385 contributes to the substrate binding site. Mg(2+)-binding residues include Lys-408, Asp-410, and Glu-411. Lys-408 is modified (N6-carboxylysine). The Proton acceptor role is filled by His-504. Substrate is bound by residues Arg-505, His-538, and Ser-585. The propeptide at 703 to 723 (LAAAFVGASTTRKASSVARRA) is linker. Residue Asn-834 coordinates substrate. Residue Lys-889 is the Proton acceptor of the active site. Lys-891 contacts substrate. The Mg(2+) site is built by Lys-914, Asp-916, and Glu-917. Position 914 is an N6-carboxylysine (Lys-914). His-1010 (proton acceptor) is an active-site residue. Residues Arg-1011, His-1044, and Ser-1091 each coordinate substrate. A propeptide spans 1209-1229 (LAAAFVGASTTRKASSVARRA) (linker). Asn-1340 is a substrate binding site. The Proton acceptor role is filled by Lys-1395. Lys-1397 contacts substrate. The Mg(2+) site is built by Lys-1420, Asp-1422, and Glu-1423. Lys-1420 is subject to N6-carboxylysine. The active-site Proton acceptor is the His-1516. Substrate contacts are provided by Arg-1517 and His-1550.

The protein belongs to the RuBisCO large chain family. Type II subfamily. In terms of assembly, homodimer. Mg(2+) is required as a cofactor. In Western blots an approximately 220 kDa polyprotein and 2 smaller proteins of about 55 and 52 kDa are detected, suggesting the polyprotein may be cleaved at one end of the linker and then at the other end to give mature RuBisCO.

It is found in the plastid. It localises to the chloroplast. The catalysed reaction is 2 (2R)-3-phosphoglycerate + 2 H(+) = D-ribulose 1,5-bisphosphate + CO2 + H2O. The enzyme catalyses D-ribulose 1,5-bisphosphate + O2 = 2-phosphoglycolate + (2R)-3-phosphoglycerate + 2 H(+). Its function is as follows. RuBisCO catalyzes two reactions: the carboxylation of D-ribulose 1,5-bisphosphate, the primary event in carbon dioxide fixation, as well as the oxidative fragmentation of the pentose substrate. Both reactions occur simultaneously and in competition at the same active site. This is Ribulose bisphosphate carboxylase (rbcL) from Prorocentrum minimum (Dinoflagellate).